The sequence spans 21 residues: Peptide PGLa-R2 (21 aa).

A Leucine amide modification is found at leucine 21.

In terms of tissue distribution, expressed by the skin glands.

The protein localises to the secreted. Antimicrobial peptide. This is Peptide PGLa-R2 from Xenopus ruwenzoriensis (Uganda clawed frog).